A 244-amino-acid chain; its full sequence is MSERDSGSSGPVKAKAAAPRAKTSGQAPFGAFVRKPVEKTEGKAKANAANAGSGATEMRMETAESWPVDAVEVGAIVDAYGLKGWVKVAAHADAGHGGDALLSAKRWWLLKGQERKSAPSLQAKTHSDSVVAHLGGVTDRDVALALRGSRVYISRSEFPALGADEFYWVDLLGLDVVNVAGVSLGKVADMIDNGAHSVLRIEYPATDKSGKPVTGERLIPFVGVFVKTVDQAAKQITVDWEADY.

The segment at 1–58 (MSERDSGSSGPVKAKAAAPRAKTSGQAPFGAFVRKPVEKTEGKAKANAANAGSGATEM) is disordered. The segment covering 13–22 (KAKAAAPRAK) has biased composition (low complexity). The segment covering 35 to 44 (KPVEKTEGKA) has biased composition (basic and acidic residues). A compositionally biased stretch (low complexity) spans 45–57 (KANAANAGSGATE). In terms of domain architecture, PRC barrel spans 163-244 (ADEFYWVDLL…QITVDWEADY (82 aa)).

It belongs to the RimM family. In terms of assembly, binds ribosomal protein uS19.

It is found in the cytoplasm. Functionally, an accessory protein needed during the final step in the assembly of 30S ribosomal subunit, possibly for assembly of the head region. Essential for efficient processing of 16S rRNA. May be needed both before and after RbfA during the maturation of 16S rRNA. It has affinity for free ribosomal 30S subunits but not for 70S ribosomes. In Paraburkholderia xenovorans (strain LB400), this protein is Ribosome maturation factor RimM.